We begin with the raw amino-acid sequence, 160 residues long: MGITKKPDLNDPVLRAKLAKGMGHNYYGEPAWPNDLLYIFPVVILGTIACNVGLAVLEPSMIGEPADPFATPLEILPEWYFFPVFQILRTVPNKLLGVLLMVSVPAGLLTVPFLENVNKFQNPFRRPVATTVFLIGTAVALWLGIGATLPIDKSLTLGLF.

Helical transmembrane passes span 36-56 (LLYI…GLAV), 95-115 (LLGV…PFLE), and 131-151 (TVFL…TLPI).

It belongs to the cytochrome b family. PetD subfamily. In terms of assembly, the 4 large subunits of the cytochrome b6-f complex are cytochrome b6, subunit IV (17 kDa polypeptide, petD), cytochrome f and the Rieske protein, while the 4 small subunits are petG, petL, petM and petN. The complex functions as a dimer.

It is found in the plastid. The protein resides in the chloroplast thylakoid membrane. In terms of biological role, component of the cytochrome b6-f complex, which mediates electron transfer between photosystem II (PSII) and photosystem I (PSI), cyclic electron flow around PSI, and state transitions. This is Cytochrome b6-f complex subunit 4 from Solanum bulbocastanum (Wild potato).